The chain runs to 600 residues: Spastin (600 aa).

The interval Met1–Pro39 is disordered. The Cytoplasmic portion of the chain corresponds to Met1–Pro53. A compositionally biased stretch (low complexity) spans Thr15–Thr33. Residues Leu54 to Trp74 constitute an intramembrane region (helical). The Cytoplasmic segment spans residues Cys75–Val600. Residues Tyr110–Leu185 enclose the MIT domain. A disordered region spans residues Gly213–Arg294. Residues Lys216–Pro228 show a composition bias toward basic and acidic residues. The span at Pro253–Thr291 shows a compositional bias: polar residues. Position 366–373 (Gly366–Thr373) interacts with ATP.

Belongs to the AAA ATPase family. Spastin subfamily. As to quaternary structure, homohexamer. The homohexamer is stabilized by ATP-binding. The homohexamer may adopt a ring conformation through which microtubules pass prior to being severed. Interacts with microtubules.

It is found in the membrane. The protein resides in the cytoplasm. The protein localises to the cytoskeleton. Its subcellular location is the microtubule organizing center. It localises to the centrosome. It is found in the perinuclear region. The protein resides in the nucleus. It carries out the reaction n ATP + n H2O + a microtubule = n ADP + n phosphate + (n+1) alpha/beta tubulin heterodimers.. Functionally, ATP-dependent microtubule severing protein that specifically recognizes and cuts microtubules that are polyglutamylated. Preferentially recognizes and acts on microtubules decorated with short polyglutamate tails: severing activity increases as the number of glutamates per tubulin rises from one to eight, but decreases beyond this glutamylation threshold. Microtubule severing promotes reorganization of cellular microtubule arrays and the release of microtubules from the centrosome following nucleation. Required for membrane traffic from the endoplasmic reticulum (ER) to the Golgi and for completion of the abscission stage of cytokinesis. Also plays a role in axon growth and the formation of axonal branches. This chain is Spastin, found in Xenopus laevis (African clawed frog).